The sequence spans 432 residues: Adenosylhomocysteinase (432 aa).

The residue at position 2 (serine 2) is an N-acetylserine. 3 residues coordinate substrate: threonine 57, aspartate 131, and glutamate 156. At serine 183 the chain carries Phosphoserine. Positions 183–350 are NAD binding; that stretch reads SVTKSKFDNL…EGRLVNLGCA (168 aa). Residues lysine 186 and aspartate 190 each contribute to the substrate site. Residue lysine 186 is modified to N6-(2-hydroxyisobutyryl)lysine. Phosphotyrosine is present on tyrosine 193.

The protein belongs to the adenosylhomocysteinase family. Homotetramer. Interaction with AHCYL1. The cofactor is NAD(+).

It is found in the cytoplasm. The protein resides in the melanosome. Its subcellular location is the nucleus. It localises to the endoplasmic reticulum. The enzyme catalyses S-adenosyl-L-homocysteine + H2O = L-homocysteine + adenosine. The protein operates within amino-acid biosynthesis; L-homocysteine biosynthesis; L-homocysteine from S-adenosyl-L-homocysteine: step 1/1. In terms of biological role, catalyzes the hydrolysis of S-adenosyl-L-homocysteine to form adenosine and homocysteine. Binds copper ions. The protein is Adenosylhomocysteinase (AHCY) of Sus scrofa (Pig).